Consider the following 130-residue polypeptide: Glycine cleavage system H protein (130 aa).

The Lipoyl-binding domain maps to 22–103; it reads KAYIGISDCA…PYGSWIAAIE (82 aa). An N6-lipoyllysine modification is found at Lys63.

The protein belongs to the GcvH family. As to quaternary structure, the glycine cleavage system is composed of four proteins: P, T, L and H. It depends on (R)-lipoate as a cofactor.

Its function is as follows. The glycine cleavage system catalyzes the degradation of glycine. The H protein shuttles the methylamine group of glycine from the P protein to the T protein. The polypeptide is Glycine cleavage system H protein (Clostridium botulinum (strain ATCC 19397 / Type A)).